We begin with the raw amino-acid sequence, 240 residues long: UDP-2,3-diacylglucosamine hydrolase (240 aa).

The Mn(2+) site is built by aspartate 7, histidine 9, aspartate 40, asparagine 78, and histidine 113. Residue 78-79 (NR) participates in substrate binding. Aspartate 121, serine 159, threonine 163, lysine 166, and histidine 194 together coordinate substrate. Mn(2+) is bound by residues histidine 194 and histidine 196.

Belongs to the LpxH family. Requires Mn(2+) as cofactor.

The protein resides in the cell inner membrane. It catalyses the reaction UDP-2-N,3-O-bis[(3R)-3-hydroxytetradecanoyl]-alpha-D-glucosamine + H2O = 2-N,3-O-bis[(3R)-3-hydroxytetradecanoyl]-alpha-D-glucosaminyl 1-phosphate + UMP + 2 H(+). It functions in the pathway glycolipid biosynthesis; lipid IV(A) biosynthesis; lipid IV(A) from (3R)-3-hydroxytetradecanoyl-[acyl-carrier-protein] and UDP-N-acetyl-alpha-D-glucosamine: step 4/6. In terms of biological role, hydrolyzes the pyrophosphate bond of UDP-2,3-diacylglucosamine to yield 2,3-diacylglucosamine 1-phosphate (lipid X) and UMP by catalyzing the attack of water at the alpha-P atom. Involved in the biosynthesis of lipid A, a phosphorylated glycolipid that anchors the lipopolysaccharide to the outer membrane of the cell. This Pseudomonas putida (strain W619) protein is UDP-2,3-diacylglucosamine hydrolase.